Here is a 256-residue protein sequence, read N- to C-terminus: DNA repair protein RecO (256 aa).

The protein belongs to the RecO family.

Functionally, involved in DNA repair and RecF pathway recombination. This chain is DNA repair protein RecO, found in Bartonella henselae (strain ATCC 49882 / DSM 28221 / CCUG 30454 / Houston 1) (Rochalimaea henselae).